Here is a 124-residue protein sequence, read N- to C-terminus: Large ribosomal subunit protein bL12 (124 aa).

The protein belongs to the bacterial ribosomal protein bL12 family. In terms of assembly, homodimer. Part of the ribosomal stalk of the 50S ribosomal subunit. Forms a multimeric L10(L12)X complex, where L10 forms an elongated spine to which 2 to 4 L12 dimers bind in a sequential fashion. Binds GTP-bound translation factors.

In terms of biological role, forms part of the ribosomal stalk which helps the ribosome interact with GTP-bound translation factors. Is thus essential for accurate translation. The chain is Large ribosomal subunit protein bL12 from Hamiltonella defensa subsp. Acyrthosiphon pisum (strain 5AT).